The following is a 111-amino-acid chain: Universal stress protein B (111 aa).

The next 2 membrane-spanning stretches (helical) occupy residues 1–21 (MIST…NMAR) and 90–110 (FILT…LAIW).

It belongs to the universal stress protein B family.

The protein resides in the cell inner membrane. The chain is Universal stress protein B from Erwinia tasmaniensis (strain DSM 17950 / CFBP 7177 / CIP 109463 / NCPPB 4357 / Et1/99).